The chain runs to 375 residues: Guanine nucleotide-binding protein subunit beta (375 aa).

WD repeat units follow at residues 63 to 93 (GHTGKVYSLDWTPEKNRIVSASQDGRLIVWN), 105 to 135 (LPCAWVMTCAFSPSGQSVACGGLDSVCSIYN), 154 to 185 (GHKGYVSSCQYVPDEDTHLITSSGDQTCVLWD), 202 to 233 (GHTADVQSVSISSSNPRLFVSGSCDTTARLWD), 246 to 276 (GHEGDVNTVKFFPDGNRFGTGSEDGTCRLFD), 293 to 323 (GDIPHVTSMAFSISGRLLFVGYSNGDCYVWD), and 339 to 369 (SHEGRISCLGLSADGSALCTGSWDTNLKIWA).

This sequence belongs to the WD repeat G protein beta family. G proteins are composed of 3 units, alpha, beta and gamma.

Its function is as follows. Guanine nucleotide-binding proteins (G proteins) are involved as a modulator or transducer in various transmembrane signaling systems. The beta and gamma chains are required for the GTPase activity, for replacement of GDP by GTP, and for G protein-effector interaction. The polypeptide is Guanine nucleotide-binding protein subunit beta (Nicotiana tabacum (Common tobacco)).